Consider the following 428-residue polypeptide: Probable pectin lyase F (428 aa).

The signal sequence occupies residues 1-20 (MVLLHPLLTAAALLGASARA). A disulfide bridge connects residues cysteine 83 and cysteine 107. Residue arginine 257 is part of the active site. An N-linked (GlcNAc...) asparagine glycan is attached at asparagine 276. Cysteine 324 and cysteine 332 are disulfide-bonded. Disordered regions lie at residues 337 to 367 (LTSS…MTTD) and 383 to 428 (GSGG…HHHY). Residues 389–417 (AASSSASITPSPTSSAIPSSSATPSSSAY) show a composition bias toward low complexity. The span at 418–428 (ARRHYARHHHY) shows a compositional bias: basic residues.

The protein belongs to the polysaccharide lyase 1 family.

Its subcellular location is the secreted. It catalyses the reaction Eliminative cleavage of (1-&gt;4)-alpha-D-galacturonan methyl ester to give oligosaccharides with 4-deoxy-6-O-methyl-alpha-D-galact-4-enuronosyl groups at their non-reducing ends.. Its function is as follows. Pectinolytic enzymes consist of four classes of enzymes: pectin lyase, polygalacturonase, pectin methylesterase and rhamnogalacturonase. Among pectinolytic enzymes, pectin lyase is the most important in depolymerization of pectin, since it cleaves internal glycosidic bonds of highly methylated pectins. The protein is Probable pectin lyase F (pelF) of Aspergillus flavus (strain ATCC 200026 / FGSC A1120 / IAM 13836 / NRRL 3357 / JCM 12722 / SRRC 167).